Consider the following 167-residue polypeptide: uncharacterized protein (167 aa).

Helical transmembrane passes span 96–115 (YVPA…FNFY) and 119–138 (WGAL…IIAV).

The protein localises to the cell membrane. This is an uncharacterized protein from Bacillus subtilis (strain 168).